The following is a 170-amino-acid chain: uncharacterized protein (170 aa).

The tract at residues 35–57 (EEVMPATAPSTDPAVPKDAQEAD) is disordered.

This is an uncharacterized protein from Candida tsukubaensis (Yeast).